The sequence spans 377 residues: RCC1 domain-containing protein 1 (377 aa).

The segment at 1–172 is interaction with KDM8; it reads MAEKRHGAWF…VRQLELGAEH (172 aa). One copy of the RCC1 1 repeat lies at 6-57; it reads HGAWFGFGFCGFGQALGSGNSHHSVYSPEPLHASDDICQVSAGWSYTALVTR. Arg-144 bears the (3R)-3-hydroxyarginine mark. 3 RCC1 repeats span residues 179–230, 232–289, and 319–372; these read AGQV…CLSE, GDIY…IAIQ, and TGEL…VYAM.

As to quaternary structure, found in a complex with KDM8. Interacts (via N-terminus) with KDM8 (via N-terminus). Specifically hydroxylated (with R stereochemistry) at C-3 of ARG-141 by KDM8.

Its subcellular location is the chromosome. Functionally, plays a role in transcriptional repression of satellite repeats, possibly by regulating H3K36 methylation levels in centromeric regions together with KDM8. Possibly together with KDM8, is involved in proper mitotic spindle organization and chromosome segregation. Plays a role in regulating alpha-tubulin deacetylation and cytoskeletal microtubule stability, thereby promoting cell migration and TGF-beta-induced epithelial to mesenchymal transition (EMT), potentially through the inhibition of KDM8. This Mus musculus (Mouse) protein is RCC1 domain-containing protein 1 (Rccd1).